The sequence spans 320 residues: Sliding-clamp-loader large subunit (320 aa).

ATP is bound by residues 12-15 (EQKY), Ile-24, 53-58 (GTGKTT), and Arg-205.

The protein belongs to the Tevenvirinae sliding-clamp-loader large subunit family. The sliding-clamp-loader consists of 4 large subunits and 1 small subunit. Interacts with the sliding clamp; this interaction allows the sliding-clamp-loader to open the sliding clamp. Part of the replicase complex that includes the DNA polymerase, the polymerase clamp, the clamp loader complex, the single-stranded DNA binding protein, the primase, the helicase and the helicase assembly factor.

In terms of biological role, forms the sliding-clamp-loader together with the small subunit. Functions as an ATPase enzyme. The clamp loader holds the clamp in an open conformation and places it onto the DNA. 4 ATP molecules must bind to the sliding-clamp-loader before the latter can open the sliding clamp. ATP hydrolysis triggers the detachment of the sliding clamp from the sliding-clamp-loader, freeing the sliding clamp to track along DNA. The protein is Sliding-clamp-loader large subunit (44) of Escherichia phage RB69 (Bacteriophage RB69).